Reading from the N-terminus, the 465-residue chain is RuvB-like helicase 2 (465 aa).

73 to 80 (GEPSTGKT) provides a ligand contact to ATP.

Belongs to the RuvB family. Forms homohexameric rings. May form a dodecamer with pont made of two stacked hexameric rings. Component of the chromatin remodeling Ino80 complex.

Its subcellular location is the nucleus. The catalysed reaction is ATP + H2O = ADP + phosphate + H(+). Its function is as follows. Acts as a transcriptional coactivator in Wg signaling. Functionally, proposed core component of the chromatin remodeling Ino80 complex which is involved in transcriptional regulation, DNA replication and probably DNA repair. The polypeptide is RuvB-like helicase 2 (Aedes aegypti (Yellowfever mosquito)).